Consider the following 590-residue polypeptide: Aspartate--tRNA(Asp/Asn) ligase (590 aa).

Position 173 (Glu-173) interacts with L-aspartate. The interval 197-200 (QIFK) is aspartate. Position 219 (Arg-219) interacts with L-aspartate. Residues 219–221 (RDE) and Gln-228 each bind ATP. L-aspartate is bound at residue His-450. Glu-484 contacts ATP. An L-aspartate-binding site is contributed by Arg-491. 536–539 (GLDR) provides a ligand contact to ATP.

The protein belongs to the class-II aminoacyl-tRNA synthetase family. Type 1 subfamily. As to quaternary structure, homodimer.

Its subcellular location is the cytoplasm. It catalyses the reaction tRNA(Asx) + L-aspartate + ATP = L-aspartyl-tRNA(Asx) + AMP + diphosphate. Aspartyl-tRNA synthetase with relaxed tRNA specificity since it is able to aspartylate not only its cognate tRNA(Asp) but also tRNA(Asn). Reaction proceeds in two steps: L-aspartate is first activated by ATP to form Asp-AMP and then transferred to the acceptor end of tRNA(Asp/Asn). The protein is Aspartate--tRNA(Asp/Asn) ligase of Coxiella burnetii (strain Dugway 5J108-111).